A 74-amino-acid polypeptide reads, in one-letter code: Peptide ToAP4 (74 aa).

Residues M1 to A22 form the signal peptide. Residue K39 is modified to Lysine amide. A propeptide spanning residues G40 to F74 is cleaved from the precursor.

This sequence belongs to the non-disulfide-bridged peptide (NDBP) superfamily. Short antimicrobial peptide (group 4) family. Expressed by the venom gland.

The protein resides in the secreted. Functionally, shows anti-inflammatory activities, since it decreases release of pro-inflammatory cytokines, and increases release of anti-inflammatory cytokines. Acts by blocking the Toll-like receptor 4 (TLR4). Also increases MHC-II expression in LPS-stimulated cells. Does not show antibacterial activity on Mycobacterium abscessus subsp. massiliense. Does not show antifungal activity. Has low hemolytic activity on human erythrocyte and low monocyte cytotoxicity. In vivo, does not induce immune cell migration. Helical wheel projections predict an amphipathic peptide with distinct hydrophobic and hydrophilic faces. The protein is Peptide ToAP4 of Tityus obscurus (Amazonian scorpion).